The chain runs to 887 residues: Cadherin-1 (887 aa).

The N-terminal stretch at Met-1–Gly-26 is a signal peptide. Residues Arg-27–Arg-160 constitute a propeptide that is removed on maturation. Cadherin domains lie at Asp-161–Phe-268, Ile-269–Phe-381, Asn-382–Phe-493, Val-494–Pro-599, and Thr-600–Tyr-704. Over Asp-161–Ile-714 the chain is Extracellular. Asp-263 is a binding site for Ca(2+). An N-linked (GlcNAc...) asparagine glycan is attached at Asn-291. Position 294 (Asp-294) interacts with Ca(2+). An N-linked (GlcNAc...) asparagine glycan is attached at Asn-346. N-linked (GlcNAc...) asparagine glycans are attached at residues Asn-564 and Asn-643. The chain crosses the membrane as a helical span at residues Leu-715 to Ala-735. Topologically, residues Arg-736–Glu-887 are cytoplasmic. The disordered stretch occupies residues Leu-745–Asp-770. The segment covering Tyr-759 to Asp-770 has biased composition (acidic residues).

In terms of assembly, homodimer. Interacts with CTNNA2. Expressed in the liver.

Its subcellular location is the cell junction. It is found in the adherens junction. The protein resides in the cell membrane. The protein localises to the endosome. It localises to the golgi apparatus. Its subcellular location is the trans-Golgi network. It is found in the cytoplasm. The protein resides in the desmosome. In terms of biological role, cadherins are calcium-dependent cell adhesion proteins. They preferentially interact with themselves in a homophilic manner in connecting cells; cadherins may thus contribute to the sorting of heterogeneous cell types. Promotes organization of radial actin fiber structure and cellular response to contractile forces, via anchoring of radial actin fibers to CDH1 junction complexes at the cell membrane. E-cadherin is a ligand for integrin alpha-E/beta-7. This is Cadherin-1 (CDH1) from Gallus gallus (Chicken).